The following is a 548-amino-acid chain: Druantia protein DruB (548 aa).

Its subcellular location is the cytoplasm. Functionally, component of antiviral defense system Druantia type I, composed of DruA, DruB, DruC, DruD and DruE. Expression of Druantia in E.coli (strain MG1655) confers resistance to phage lambda, SECphi18, SECphi27 and T4. The sequence is that of Druantia protein DruB from Escherichia coli (strain UMEA 4076-1).